Consider the following 622-residue polypeptide: MIVPMKKVTLLVLGSEQERSLQALRSFGAVHVQLRECASEQLAELHALDARCVQAIALVTDAQTKNVTRGEECRVAGQVVEAAEAVEQIVRTHSDRVELAQRIAQCIAHLERCEPWGDFDPADVRALAQRGIHLIPVELSERSYRCLPDELQTLCLARRGGLVRCVLVADKPGLPPSLPADARALELPDVSPADLFVRLRQLREECATLTQRLLAYSEYQGAIRALRQKIAADIEFERVHLSMVSVDVSQWRETGETLRIAHVSGYLPVSRVRAFSECARKEAWAYCCVDPMPEDPVPTQLRNNRWVNLISPLMNFLGTVPGYWEVDISGFFLLFFGVFFSIIFADAGYGAVLTLVSLGGIVLSKRKHAVVSPAWCLGLYLGTLTMVWGALVCNWFGVPVQYVPASLARIAVWEISGFADAAQRNKNQMHVCFFLGLLHLCLGHLIVVRRTFRSLRVLAEFGSLLMLGGMYVVVLNLIVDKERYPLTGMIVGSIIAGFVLNFIFVNYRVSVRQSVADSMKNVINALLGIVNVFADVMSYIRLWAVGLAGGAISATVNEMTHPLFANFLAFLGIVLLLFGHGLNYVMSILSVIVHGVRLNTLEFSNHVGLMWTGIRYTPFRER.

The next 8 membrane-spanning stretches (helical) occupy residues 306–326 (WVNL…YWEV), 328–348 (ISGF…ADAG), 373–393 (PAWC…ALVC), 428–448 (QMHV…LIVV), 459–479 (AEFG…NLIV), 485–505 (PLTG…FIFV), 532–552 (VFAD…GGAI), and 562–582 (PLFA…GHGL).

The protein belongs to the V-ATPase 116 kDa subunit family.

It localises to the cell membrane. In terms of biological role, produces ATP from ADP in the presence of a proton gradient across the membrane. This chain is V-type ATP synthase subunit I 1 (atpI1), found in Treponema pallidum (strain Nichols).